Consider the following 575-residue polypeptide: Interleukin-1 receptor-like 2 (575 aa).

An N-terminal signal peptide occupies residues 1–19 (MWSLLLCGLSIALPLSVTA). 3 Ig-like C2-type domains span residues 20–111 (DGCK…VNLT), 126–211 (PNLS…VLNG), and 222–318 (YGGS…MCHA). The Extracellular portion of the chain corresponds to 20–335 (DGCKDIFMKN…ILQLPAPDFR (316 aa)). 9 N-linked (GlcNAc...) asparagine glycosylation sites follow: asparagine 41, asparagine 59, asparagine 109, asparagine 127, asparagine 184, asparagine 234, asparagine 250, asparagine 266, and asparagine 299. A disulfide bridge links cysteine 42 with cysteine 95. An intrachain disulfide couples cysteine 146 to cysteine 195. A disulfide bond links cysteine 249 and cysteine 316. The chain crosses the membrane as a helical span at residues 336–356 (AYLIGGLIALVAVAVSVVYIY). The Cytoplasmic portion of the chain corresponds to 357 to 575 (NIFKIDIVLW…RRKKCTLTTG (219 aa)). Residues 381–536 (KLYDAYVLYP…KFWKTVRYHM (156 aa)) form the TIR domain. Glutamate 467 is a catalytic residue.

This sequence belongs to the interleukin-1 receptor family. Interacts with IL1RAP; the association is enhanced by IL36B indicative for an functional signaling complex and inhibited by IL36RN. As to expression, expressed in synovial fibroblasts and articular chondrocytes. Expressed in keratinocytes and monocyte-derived dendritic cells. Expressed in monocytes and myeloid dendritic cells; at protein level.

The protein resides in the membrane. It catalyses the reaction NAD(+) + H2O = ADP-D-ribose + nicotinamide + H(+). Its function is as follows. Receptor for interleukin-36 (IL36A, IL36B and IL36G). After binding to interleukin-36 associates with the coreceptor IL1RAP to form the interleukin-36 receptor complex which mediates interleukin-36-dependent activation of NF-kappa-B, MAPK and other pathways. The IL-36 signaling system is thought to be present in epithelial barriers and to take part in local inflammatory response; it is similar to the IL-1 system. Seems to be involved in skin inflammatory response by induction of the IL-23/IL-17/IL-22 pathway. The sequence is that of Interleukin-1 receptor-like 2 (IL1RL2) from Homo sapiens (Human).